Consider the following 225-residue polypeptide: Deoxyribose-phosphate aldolase (225 aa).

The Proton donor/acceptor role is filled by Asp96. Lys157 (schiff-base intermediate with acetaldehyde) is an active-site residue. Lys185 acts as the Proton donor/acceptor in catalysis.

It belongs to the DeoC/FbaB aldolase family. DeoC type 1 subfamily.

The protein resides in the cytoplasm. It catalyses the reaction 2-deoxy-D-ribose 5-phosphate = D-glyceraldehyde 3-phosphate + acetaldehyde. It participates in carbohydrate degradation; 2-deoxy-D-ribose 1-phosphate degradation; D-glyceraldehyde 3-phosphate and acetaldehyde from 2-deoxy-alpha-D-ribose 1-phosphate: step 2/2. Functionally, catalyzes a reversible aldol reaction between acetaldehyde and D-glyceraldehyde 3-phosphate to generate 2-deoxy-D-ribose 5-phosphate. The protein is Deoxyribose-phosphate aldolase of Microcystis aeruginosa (strain NIES-843 / IAM M-2473).